We begin with the raw amino-acid sequence, 220 residues long: Thiamine-phosphate synthase (220 aa).

4-amino-2-methyl-5-(diphosphooxymethyl)pyrimidine-binding positions include 47–51 (QYREK) and Asn-78. Residues Asp-79 and Asp-98 each coordinate Mg(2+). Ser-117 provides a ligand contact to 4-amino-2-methyl-5-(diphosphooxymethyl)pyrimidine. 143-145 (TAT) provides a ligand contact to 2-[(2R,5Z)-2-carboxy-4-methylthiazol-5(2H)-ylidene]ethyl phosphate. Lys-146 provides a ligand contact to 4-amino-2-methyl-5-(diphosphooxymethyl)pyrimidine. 2-[(2R,5Z)-2-carboxy-4-methylthiazol-5(2H)-ylidene]ethyl phosphate-binding positions include Gly-174 and 194-195 (IS).

It belongs to the thiamine-phosphate synthase family. Requires Mg(2+) as cofactor.

It carries out the reaction 2-[(2R,5Z)-2-carboxy-4-methylthiazol-5(2H)-ylidene]ethyl phosphate + 4-amino-2-methyl-5-(diphosphooxymethyl)pyrimidine + 2 H(+) = thiamine phosphate + CO2 + diphosphate. The catalysed reaction is 2-(2-carboxy-4-methylthiazol-5-yl)ethyl phosphate + 4-amino-2-methyl-5-(diphosphooxymethyl)pyrimidine + 2 H(+) = thiamine phosphate + CO2 + diphosphate. It catalyses the reaction 4-methyl-5-(2-phosphooxyethyl)-thiazole + 4-amino-2-methyl-5-(diphosphooxymethyl)pyrimidine + H(+) = thiamine phosphate + diphosphate. The protein operates within cofactor biosynthesis; thiamine diphosphate biosynthesis; thiamine phosphate from 4-amino-2-methyl-5-diphosphomethylpyrimidine and 4-methyl-5-(2-phosphoethyl)-thiazole: step 1/1. Condenses 4-methyl-5-(beta-hydroxyethyl)thiazole monophosphate (THZ-P) and 2-methyl-4-amino-5-hydroxymethyl pyrimidine pyrophosphate (HMP-PP) to form thiamine monophosphate (TMP). In Methanosarcina barkeri (strain Fusaro / DSM 804), this protein is Thiamine-phosphate synthase.